We begin with the raw amino-acid sequence, 79 residues long: Acyl carrier protein (79 aa).

The Carrier domain maps to 2–77 (SDIEARVKKI…NAVDYATKNQ (76 aa)). The residue at position 37 (Ser-37) is an O-(pantetheine 4'-phosphoryl)serine.

Belongs to the acyl carrier protein (ACP) family. 4'-phosphopantetheine is transferred from CoA to a specific serine of apo-ACP by AcpS. This modification is essential for activity because fatty acids are bound in thioester linkage to the sulfhydryl of the prosthetic group.

The protein localises to the cytoplasm. It functions in the pathway lipid metabolism; fatty acid biosynthesis. In terms of biological role, carrier of the growing fatty acid chain in fatty acid biosynthesis. The protein is Acyl carrier protein of Variovorax paradoxus (strain S110).